Here is a 1443-residue protein sequence, read N- to C-terminus: DNA polymerase III PolC-type (1443 aa).

The 160-residue stretch at 408–567 (FVIFDIETTG…YDTQALKKVF (160 aa)) folds into the Exonuclease domain.

This sequence belongs to the DNA polymerase type-C family. PolC subfamily.

The protein localises to the cytoplasm. The catalysed reaction is DNA(n) + a 2'-deoxyribonucleoside 5'-triphosphate = DNA(n+1) + diphosphate. Its function is as follows. Required for replicative DNA synthesis. This DNA polymerase also exhibits 3' to 5' exonuclease activity. This chain is DNA polymerase III PolC-type, found in Mycoplasma pneumoniae (strain ATCC 29342 / M129 / Subtype 1) (Mycoplasmoides pneumoniae).